Reading from the N-terminus, the 20-residue chain is Acidic phospholipase A2 CbIbeta (20 aa).

The protein belongs to the phospholipase A2 family. Group II subfamily. D49 sub-subfamily. As to quaternary structure, heterodimer of an acidic subunit (CbIalpha or CbIbeta) and a basic subunit (CbII). The acidic subunit (CbI) is non-toxic, and increases the toxicity of the basic subunit (CbII). Ca(2+) serves as cofactor. Post-translationally, contains 7 disulfide bonds. As to expression, expressed by the venom gland.

Its subcellular location is the secreted. The catalysed reaction is a 1,2-diacyl-sn-glycero-3-phosphocholine + H2O = a 1-acyl-sn-glycero-3-phosphocholine + a fatty acid + H(+). Heterodimer: presynaptic neurotoxin. Its function is as follows. Monomer: Snake venom phospholipase A2 (PLA2) is inactive towards micellar phosphatidylcholine but is weakly active towards non-micellar dithiolecithin. PLA2 catalyzes the calcium-dependent hydrolysis of the 2-acyl groups in 3-sn-phosphoglycerides. In Pseudocerastes fieldi (Field's horned viper), this protein is Acidic phospholipase A2 CbIbeta.